Reading from the N-terminus, the 463-residue chain is Cytoplasmic tRNA 2-thiolation protein 2 (463 aa).

It belongs to the CTU2/NCS2 family.

It localises to the cytoplasm. Its pathway is tRNA modification; 5-methoxycarbonylmethyl-2-thiouridine-tRNA biosynthesis. Its function is as follows. Plays a central role in 2-thiolation of mcm(5)S(2)U at tRNA wobble positions of tRNA(Lys), tRNA(Glu) and tRNA(Gln). May act by forming a heterodimer with NCS6 that ligates sulfur from thiocarboxylated URM1 onto the uridine of tRNAs at wobble position. Prior mcm(5) tRNA modification by the elongator complex is required for 2-thiolation. May also be involved in protein urmylation. The chain is Cytoplasmic tRNA 2-thiolation protein 2 from Kluyveromyces lactis (strain ATCC 8585 / CBS 2359 / DSM 70799 / NBRC 1267 / NRRL Y-1140 / WM37) (Yeast).